Reading from the N-terminus, the 937-residue chain is Isoleucine--tRNA ligase (937 aa).

The 'HIGH' region motif lies at proline 58 to threonine 68. An L-isoleucyl-5'-AMP-binding site is contributed by glutamate 566. A 'KMSKS' region motif is present at residues lysine 607–serine 611. Residue lysine 610 coordinates ATP. Cysteine 906, cysteine 909, cysteine 925, and cysteine 928 together coordinate Zn(2+).

It belongs to the class-I aminoacyl-tRNA synthetase family. IleS type 1 subfamily. In terms of assembly, monomer. Requires Zn(2+) as cofactor.

The protein resides in the cytoplasm. The catalysed reaction is tRNA(Ile) + L-isoleucine + ATP = L-isoleucyl-tRNA(Ile) + AMP + diphosphate. Catalyzes the attachment of isoleucine to tRNA(Ile). As IleRS can inadvertently accommodate and process structurally similar amino acids such as valine, to avoid such errors it has two additional distinct tRNA(Ile)-dependent editing activities. One activity is designated as 'pretransfer' editing and involves the hydrolysis of activated Val-AMP. The other activity is designated 'posttransfer' editing and involves deacylation of mischarged Val-tRNA(Ile). This is Isoleucine--tRNA ligase from Lawsonia intracellularis (strain PHE/MN1-00).